A 332-amino-acid chain; its full sequence is 3-dehydroquinate synthase (332 aa).

Residues 55–60, 89–93, 113–114, Lys126, Lys134, and 152–155 contribute to the NAD(+) site; these read DGEEYK, GVITD, TT, and TLST. Glu167, His226, and His242 together coordinate Zn(2+).

The protein belongs to the sugar phosphate cyclases superfamily. Dehydroquinate synthase family. Requires NAD(+) as cofactor. Co(2+) is required as a cofactor. It depends on Zn(2+) as a cofactor.

The protein resides in the cytoplasm. It carries out the reaction 7-phospho-2-dehydro-3-deoxy-D-arabino-heptonate = 3-dehydroquinate + phosphate. It participates in metabolic intermediate biosynthesis; chorismate biosynthesis; chorismate from D-erythrose 4-phosphate and phosphoenolpyruvate: step 2/7. Functionally, catalyzes the conversion of 3-deoxy-D-arabino-heptulosonate 7-phosphate (DAHP) to dehydroquinate (DHQ). This is 3-dehydroquinate synthase from Pyrococcus abyssi (strain GE5 / Orsay).